A 119-amino-acid polypeptide reads, in one-letter code: Holo-[acyl-carrier-protein] synthase (119 aa).

2 residues coordinate Mg(2+): aspartate 7 and glutamate 53.

This sequence belongs to the P-Pant transferase superfamily. AcpS family. Requires Mg(2+) as cofactor.

Its subcellular location is the cytoplasm. The catalysed reaction is apo-[ACP] + CoA = holo-[ACP] + adenosine 3',5'-bisphosphate + H(+). Functionally, transfers the 4'-phosphopantetheine moiety from coenzyme A to a Ser of acyl-carrier-protein. This Dehalococcoides mccartyi (strain CBDB1) protein is Holo-[acyl-carrier-protein] synthase.